We begin with the raw amino-acid sequence, 86 residues long: Small ribosomal subunit protein bS20 (86 aa).

Over residues 1–11 the composition is skewed to basic residues; that stretch reads MANIKSQKKRV. The interval 1–20 is disordered; it reads MANIKSQKKRVRTNEKAHQR.

The protein belongs to the bacterial ribosomal protein bS20 family.

Functionally, binds directly to 16S ribosomal RNA. The sequence is that of Small ribosomal subunit protein bS20 from Bifidobacterium animalis subsp. lactis (strain AD011).